A 459-amino-acid chain; its full sequence is MDEAGSPAPAGTGGGDDPGGSTRETSRRLSREQIFVLVSAASMNLGCMMTYSILGPFFPKEAEKKGASNTMIGMIFGCYALFELLASLVFGKYLVHIGAKFMFIAGMFVSGGVTILFGVLDQLPEGPIFIAMCFLVRIVDAIGFGAAITASSSILAKAFPNNVATVMGSLEVFSGLGLVAGPPLGGLLYQSFGYEVPFIFLGCIVLLMIPLNLYILPSYAQESDPGKQSFWKLVTLPKMGLLAFVIISLSSCFGFLDPTLSLFVMEKFSLSTGYVGLVFLGLSLSYAISSPLFGLLSDKMPTLRKWLLVFGNLITAGCYMLLGPVPLLHIKSQLWLLVLVLVVNGISAGMSIIPTFPEMLSCAYANGFEDSISTLGLVSGLFGAMWSVGAFMGPILGGFLCEKIGFEWAAAMQGLWTLLSGVSMALFYLWEDSTARRRSKAQNSLGTEEERAALLPNDT.

M1 is modified (N-acetylmethionine). Over residues 1 to 10 (MDEAGSPAPA) the composition is skewed to low complexity. The interval 1–27 (MDEAGSPAPAGTGGGDDPGGSTRETSR) is disordered. Topologically, residues 1 to 33 (MDEAGSPAPAGTGGGDDPGGSTRETSRRLSREQ) are cytoplasmic. The residue at position 21 (S21) is a Phosphoserine. A helical transmembrane segment spans residues 34–54 (IFVLVSAASMNLGCMMTYSIL). Residues 55–70 (GPFFPKEAEKKGASNT) lie on the Extracellular side of the membrane. A helical membrane pass occupies residues 71–91 (MIGMIFGCYALFELLASLVFG). Topologically, residues 92 to 100 (KYLVHIGAK) are cytoplasmic. A helical membrane pass occupies residues 101–121 (FMFIAGMFVSGGVTILFGVLD). Topologically, residues 122 to 127 (QLPEGP) are extracellular. A helical transmembrane segment spans residues 128–148 (IFIAMCFLVRIVDAIGFGAAI). Residues 149 to 167 (TASSSILAKAFPNNVATVM) lie on the Cytoplasmic side of the membrane. Residues 168–188 (GSLEVFSGLGLVAGPPLGGLL) traverse the membrane as a helical segment. The Extracellular portion of the chain corresponds to 189 to 195 (YQSFGYE). Residues 196–216 (VPFIFLGCIVLLMIPLNLYIL) form a helical membrane-spanning segment. The Cytoplasmic segment spans residues 217 to 235 (PSYAQESDPGKQSFWKLVT). The helical transmembrane segment at 236 to 256 (LPKMGLLAFVIISLSSCFGFL) threads the bilayer. Residues 257–274 (DPTLSLFVMEKFSLSTGY) lie on the Extracellular side of the membrane. The helical transmembrane segment at 275-295 (VGLVFLGLSLSYAISSPLFGL) threads the bilayer. Residues 296-306 (LSDKMPTLRKW) are Cytoplasmic-facing. The helical transmembrane segment at 307-327 (LLVFGNLITAGCYMLLGPVPL) threads the bilayer. The Extracellular portion of the chain corresponds to 328 to 333 (LHIKSQ). A helical membrane pass occupies residues 334 to 354 (LWLLVLVLVVNGISAGMSIIP). Over 355-379 (TFPEMLSCAYANGFEDSISTLGLVS) the chain is Cytoplasmic. Residues 380–400 (GLFGAMWSVGAFMGPILGGFL) form a helical membrane-spanning segment. Over 401 to 409 (CEKIGFEWA) the chain is Extracellular. A helical membrane pass occupies residues 410–430 (AAMQGLWTLLSGVSMALFYLW). Over 431-459 (EDSTARRRSKAQNSLGTEEERAALLPNDT) the chain is Cytoplasmic. The segment at 440 to 459 (KAQNSLGTEEERAALLPNDT) is disordered.

This sequence belongs to the major facilitator superfamily. In terms of tissue distribution, widely expressed, with highest expression in the lung, pancreas and kidney. High expression in the CNS, particularly in the hypothalamus, the thalamus and the cerebellum. In the forebrain, abundantly expressed in the telencephalon, especially in the cerebral cortex layers, except layer 1, as well as in the induseum griseum, the piriform area, the taenia tecta, dorsal part and in the entorhinal area, lateral part. Lower levels in the bed anterior olfactory nucleus, posteroventral part and in layer two of the olfactory tubercle. In the amygdala, high levels observed in the intercalated nucleus and the medial nucleus. In the diencephalon, expressed in the nuclei in both the hypothalamus and thalamus. Among the hypothalamic areas, strongest expression in the arcuate nucleus and in the ventromedial nucleus, as well as in the suprachiasmatic nucleus, anterior nucleus, especially in its central part, and in the magnocellular division of the paraventricular nucleus. In the thalamus, highest levels in the medial habenula. Expression also observed in the paraventricular thalamic nucleus, parataenial nucleus, central medial nucleus, intermediodorsal nucleus and lateral dorsal nucleus. In the hindbrain, detected in the cerebellum and in the pons. In the midbrain and the medulla, expression levels were modest. In the midbrain, highest expression in the periaqueductal gray and all subdivisions of the interpeduncular nucleus, except for the caudal part. In the pons, the strongest labeling was seen in the nucleus incertus and in the tegmental nucleus. Expressed in bone marrow-derived mast cells (at protein level).

The protein resides in the cytoplasmic vesicle. Its subcellular location is the secretory vesicle membrane. The protein localises to the secretory vesicle. It is found in the synaptic vesicle membrane. The catalysed reaction is spermine(in) + n H(+)(out) = spermine(out) + n H(+)(in). It catalyses the reaction spermidine(in) + n H(+)(out) = spermidine(out) + n H(+)(in). The enzyme catalyses serotonin(in) + n H(+)(out) = serotonin(out) + n H(+)(in). In terms of biological role, proton-coupled polyamine antiporter involved in the translocation of polyamines from cytosol into secretory vesicles prior to their release via exocytosis. Uses the electrochemical proton gradient generated by a V-type proton-pumping ATPase to couple the efflux of protons with the uptake of a polyamine molecule. Facilitates vesicular storage of spermine and spermidine in astrocytes with an impact on glutamatergic neuronal transmission and memory formation. Upon antigen stimulation, regulates polyamine accumulation and release in mast cell secretory granules, which in turn potentiates mast cell degranulation and histamine secretion. In Mus musculus (Mouse), this protein is MFS-type transporter SLC18B1.